Reading from the N-terminus, the 188-residue chain is UPF0340 protein SSU98_0310 (188 aa).

This sequence belongs to the UPF0340 family.

In Streptococcus suis (strain 98HAH33), this protein is UPF0340 protein SSU98_0310.